A 50-amino-acid chain; its full sequence is MKVLASLKQAKLRHRDCQVVKRRGRLYVICKSNPRFKCVQGRPKPKIKRR.

It belongs to the bacterial ribosomal protein bL36 family.

The protein is Large ribosomal subunit protein bL36B of Pseudomonas aeruginosa (strain UCBPP-PA14).